The chain runs to 631 residues: UvrABC system protein C (631 aa).

A GIY-YIG domain is found at 26-105 (SSPGVYQFKN…IKELKPRYNV (80 aa)). The UVR domain occupies 219–254 (SATIRSLNERMLSFAKELKFEQAAELKTQIDSLKRY).

It belongs to the UvrC family. In terms of assembly, interacts with UvrB in an incision complex.

Its subcellular location is the cytoplasm. In terms of biological role, the UvrABC repair system catalyzes the recognition and processing of DNA lesions. UvrC both incises the 5' and 3' sides of the lesion. The N-terminal half is responsible for the 3' incision and the C-terminal half is responsible for the 5' incision. This chain is UvrABC system protein C, found in Chlorobium phaeobacteroides (strain DSM 266 / SMG 266 / 2430).